Reading from the N-terminus, the 455-residue chain is MEFDTIAAISTPIGTGGIGIIRISGQNSIEVAGKIIKSKRFNSIYDIPVRYAALVEVYDNDEFIDQAILIKFKAPHSYTGEDVVEIQSHGGMVVLRRILEVVIKNGARHAMPGEFTKRAFLNGRLDLSQAEAIIDIINSKTELLQKNAAKQLKGVLSKKIDEIAEILLNLISSIEASIDFSEHEVDEISPQEIEKSIDTALEMIYRLLKTYETGRAIKSGIYTVIVGRPNVGKSSLLNRLLKEERSIVTDIPGTTRDVIEEVLDIEGIPIILVDTAGVRQTEDIVERIGVERTLKSVERADLVIFMIESDGITKEDIEIFSSIKNKKYIILVNKTDKGINISQDEIKKLFGKEGIFISIAKDENLELVEKAIKEAILEQNIEGFDEVLITNLRHKELLLKAKGFLTSAKQNLYSFPLDILSIDLKNALDSIYQITGKNVTEDMVDRIFSMFCIGK.

(6S)-5-formyl-5,6,7,8-tetrahydrofolate contacts are provided by Arg-22, Glu-85, and Arg-124. The TrmE-type G domain maps to 220–377 (GIYTVIVGRP…VEKAIKEAIL (158 aa)). A K(+)-binding site is contributed by Asn-230. Residues 230–235 (NVGKSS), 249–255 (TDIPGTT), and 274–277 (DTAG) each bind GTP. Ser-234 lines the Mg(2+) pocket. K(+) is bound by residues Thr-249, Ile-251, and Thr-254. Thr-255 is a Mg(2+) binding site. Residue Lys-455 participates in (6S)-5-formyl-5,6,7,8-tetrahydrofolate binding.

Belongs to the TRAFAC class TrmE-Era-EngA-EngB-Septin-like GTPase superfamily. TrmE GTPase family. As to quaternary structure, homodimer. Heterotetramer of two MnmE and two MnmG subunits. K(+) is required as a cofactor.

It is found in the cytoplasm. Its function is as follows. Exhibits a very high intrinsic GTPase hydrolysis rate. Involved in the addition of a carboxymethylaminomethyl (cmnm) group at the wobble position (U34) of certain tRNAs, forming tRNA-cmnm(5)s(2)U34. This is tRNA modification GTPase MnmE from Caldicellulosiruptor saccharolyticus (strain ATCC 43494 / DSM 8903 / Tp8T 6331).